The primary structure comprises 208 residues: ATP synthase subunit b 1 (208 aa).

Residues 1–18 show a composition bias toward polar residues; sequence MFVSTAFAQTATESQPAS. A disordered region spans residues 1 to 26; the sequence is MFVSTAFAQTATESQPASTAGEHGAA. The helical transmembrane segment at 56–78 threads the bilayer; it reads SQVLWLAITFGLFYLFLSRVVLP.

The protein belongs to the ATPase B chain family. As to quaternary structure, F-type ATPases have 2 components, F(1) - the catalytic core - and F(0) - the membrane proton channel. F(1) has five subunits: alpha(3), beta(3), gamma(1), delta(1), epsilon(1). F(0) has three main subunits: a(1), b(2) and c(10-14). The alpha and beta chains form an alternating ring which encloses part of the gamma chain. F(1) is attached to F(0) by a central stalk formed by the gamma and epsilon chains, while a peripheral stalk is formed by the delta and b chains.

It is found in the cell inner membrane. F(1)F(0) ATP synthase produces ATP from ADP in the presence of a proton or sodium gradient. F-type ATPases consist of two structural domains, F(1) containing the extramembraneous catalytic core and F(0) containing the membrane proton channel, linked together by a central stalk and a peripheral stalk. During catalysis, ATP synthesis in the catalytic domain of F(1) is coupled via a rotary mechanism of the central stalk subunits to proton translocation. In terms of biological role, component of the F(0) channel, it forms part of the peripheral stalk, linking F(1) to F(0). The protein is ATP synthase subunit b 1 of Brucella abortus (strain 2308).